The following is an 810-amino-acid chain: DNA gyrase subunit A (810 aa).

Residues 36–502 enclose the Topo IIA-type catalytic domain; sequence LPDVRDGLKP…EVLKTSMSDL (467 aa). Tyrosine 124 serves as the catalytic O-(5'-phospho-DNA)-tyrosine intermediate. The C-terminal domain stretch occupies residues 499–810; that stretch reads MSDLMQKENI…SLVSVSKFIK (312 aa). Positions 529-535 match the GyrA-box motif; sequence QGTGGKG.

The protein belongs to the type II topoisomerase GyrA/ParC subunit family. In terms of assembly, heterotetramer, composed of two GyrA and two GyrB chains. In the heterotetramer, GyrA contains the active site tyrosine that forms a transient covalent intermediate with DNA, while GyrB binds cofactors and catalyzes ATP hydrolysis.

It localises to the cytoplasm. It catalyses the reaction ATP-dependent breakage, passage and rejoining of double-stranded DNA.. Functionally, a type II topoisomerase that negatively supercoils closed circular double-stranded (ds) DNA in an ATP-dependent manner to modulate DNA topology and maintain chromosomes in an underwound state. Negative supercoiling favors strand separation, and DNA replication, transcription, recombination and repair, all of which involve strand separation. Also able to catalyze the interconversion of other topological isomers of dsDNA rings, including catenanes and knotted rings. Type II topoisomerases break and join 2 DNA strands simultaneously in an ATP-dependent manner. This Borreliella burgdorferi (strain ATCC 35210 / DSM 4680 / CIP 102532 / B31) (Borrelia burgdorferi) protein is DNA gyrase subunit A.